The chain runs to 2081 residues: RNA1 polyprotein (2081 aa).

2 helical membrane-spanning segments follow: residues 481–501 (ILLL…IYSV) and 515–535 (ISLG…LFNS). The region spanning 714 to 881 (LKEDHTQLQL…PGVEPGPRGV (168 aa)) is the SF3 helicase domain. 741 to 748 (GDSGVGKS) contacts ATP. Positions 877-900 (GPRGVDNLEFSEMDNRDSNGEPAY) are disordered. Residues 1166 to 1388 (GAEIPEALEA…ALYADIPHEF (223 aa)) form the Peptidase C3 domain. Catalysis depends on for picornain 3C-like protease activity residues histidine 1210, glutamate 1255, and cysteine 1348. Positions 1679–1810 (ANHFTGDYSG…SVATPVASVY (132 aa)) constitute a RdRp catalytic domain.

The protein resides in the host membrane. The catalysed reaction is RNA(n) + a ribonucleoside 5'-triphosphate = RNA(n+1) + diphosphate. Functionally, picornain 3C-like protease is a thiol protease that probably cleaves the polyprotein. The chain is RNA1 polyprotein from Citrus unshiu (Satsuma mandarin).